Here is a 166-residue protein sequence, read N- to C-terminus: Large ribosomal subunit protein uL10 (166 aa).

The protein belongs to the universal ribosomal protein uL10 family. Part of the ribosomal stalk of the 50S ribosomal subunit. The N-terminus interacts with L11 and the large rRNA to form the base of the stalk. The C-terminus forms an elongated spine to which L12 dimers bind in a sequential fashion forming a multimeric L10(L12)X complex.

Forms part of the ribosomal stalk, playing a central role in the interaction of the ribosome with GTP-bound translation factors. The polypeptide is Large ribosomal subunit protein uL10 (Bacillus cereus (strain 03BB102)).